The chain runs to 1385 residues: MMSLRLFSILLATVVSGAWGWGYYGCNEELVGPLYARSLGASSYYGLFTTARFARLHGISGWSPRIGDPNPWLQIDLMKKHRIRAVATQGAFNSWDWVTRYMLLYGDRVDSWTPFYQKGHNATFFGNVNDSAVVRHDLHYHFTARYIRIVPLAWNPRGKIGLRLGIYGCPYTSSILYFDGDDAISYRFQRGASQSLWDVFAFSFKTEEKDGLLLHTEGSQGDYVTLELQGAHLLLHMSLGSSPIQPRPGHTTVSLGGVLNDLSWHYVRVDRYGRDANFTLDGYAHHFVLNGDFERLNLENEIFIGGLVGAARKNLAYRHNFRGCIENVIYNRINIAEMAVMRHSRITFEGNVAFRCLDPVPHPINFGGPHNFVQVPGFPRRGRLAVSFRFRTWDLTGLLLFSHLGDGLGHVELMLSEGQVNVSIAQTGRKKLQFAAGYRLNDGFWHEVNFVAQENHAVISIDDVEGAEVRVSYPLLIRTGTSYFFGGCPKPASRWGCHSNQTAFHGCMELLKVDGQLVNLTLVEFRKLGYFAEVLFDTCGITDRCSPNMCEHDGRCYQSWDDFICYCELTGYKGVTCHEPLYKESCEAYRLSGKYSGNYTIDPDGSGPLKPFVVYCDIRENRAWTVVRHDRLWTTRVTGSSMDRPFLGAIQYWNASWEEVSALANASQHCEQWIEFSCYNSRLLNTAGGYPYSFWIGRNEEQHFYWGGSQPGIQRCACGLDQSCVDPALHCNCDADQPQWRTDKGLLTFVDHLPVTQVVVGDTNRSNSEAQFFLRPLRCYGDRNSWNTISFHTGAALRFPPIRANHSLDVSFYFRTSAPSGVFLENMGGPFCRWRRPYVRVELNTSRDVVFAFDIGNGDENLTVHSDDFEFNDDEWHLVRAEINVKQARLRVDHRPWVLRPMPLQTYIWLVYDQPLYVGSAELKRRPFVGCLRAMRLNGVTLNLEGRANASEGTFPNCTGHCTHPRFPCFHGGRCVERYSYYTCDCDLTAFDGPYCNHDIGGFFETGTWMRYNLQSALRSAAREFSHMLSRPVPGYEPGYVPGYDTPGYVPGYHGPGYRLPEYPRPGRPVPGYRGPVYNVTGEEVSFSFSTNSAPAVLLYVSSFVRDYMAVLIKEDGTLQLRYQLGTSPYVYQLTTRPVTDGQPHSVNITRVYRNLFIQVDYFPLTEQKFSLLVDSQLDSPKALYLGRVMETGVIDPEIQRYNTPGFSGCLSGVRFNNVAPLKTHFRTPRPMTAELAEAMRVQGELSESNCGAMPRLVSEVPPELDPWYLPPDFPYYHDDGWIAILLGFLVAFLLLGLVGMLVLFYLQNHRYKGSYHTNEPKATHDSHPGGKAPLPPSGPAQAPAPTPAPTQLPTPAPAPAPAPASGPGPRDQNLPQILEESRSE.

The first 20 residues, 1–20 (MMSLRLFSILLATVVSGAWG), serve as a signal peptide directing secretion. Over 21-1284 (WGYYGCNEEL…PYYHDDGWIA (1264 aa)) the chain is Extracellular. In terms of domain architecture, F5/8 type C spans 26 to 169 (CNEELVGPLY…IGLRLGIYGC (144 aa)). A disulfide bond links cysteine 26 and cysteine 169. Residues asparagine 121, asparagine 129, and asparagine 277 are each glycosylated (N-linked (GlcNAc...) asparagine). Laminin G-like domains are found at residues 204–356 (FKTE…AFRC) and 390–539 (FRTW…FDTC). A disulfide bond links cysteine 324 and cysteine 356. Asparagine 421, asparagine 500, and asparagine 519 each carry an N-linked (GlcNAc...) asparagine glycan. 4 disulfide bridges follow: cysteine 507–cysteine 539, cysteine 545–cysteine 556, cysteine 550–cysteine 565, and cysteine 567–cysteine 577. Residues 545–577 (CSPNMCEHDGRCYQSWDDFICYCELTGYKGVTC) enclose the EGF-like 1 domain. One can recognise a Fibrinogen C-terminal domain in the interval 577 to 796 (CHEPLYKESC…NTISFHTGAA (220 aa)). N-linked (GlcNAc...) asparagine glycosylation is found at asparagine 598, asparagine 654, asparagine 665, asparagine 764, asparagine 805, asparagine 844, asparagine 861, asparagine 949, and asparagine 957. Positions 814–958 (FRTSAPSGVF…NASEGTFPNC (145 aa)) constitute a Laminin G-like 3 domain. 4 cysteine pairs are disulfide-bonded: cysteine 931–cysteine 958, cysteine 962–cysteine 975, cysteine 969–cysteine 984, and cysteine 986–cysteine 996. Positions 962–996 (CTHPRFPCFHGGRCVERYSYYTCDCDLTAFDGPYC) constitute an EGF-like 2 domain. N-linked (GlcNAc...) asparagine glycosylation is found at asparagine 1079 and asparagine 1148. One can recognise a Laminin G-like 4 domain in the interval 1089 to 1251 (FSTNSAPAVL…VQGELSESNC (163 aa)). Cysteines 1210 and 1251 form a disulfide. The chain crosses the membrane as a helical span at residues 1285 to 1305 (ILLGFLVAFLLLGLVGMLVLF). Residues 1306-1385 (YLQNHRYKGS…PQILEESRSE (80 aa)) are Cytoplasmic-facing. The tract at residues 1317-1385 (HTNEPKATHD…PQILEESRSE (69 aa)) is disordered. The span at 1319–1329 (NEPKATHDSHP) shows a compositional bias: basic and acidic residues. Pro residues predominate over residues 1334–1367 (PLPPSGPAQAPAPTPAPTQLPTPAPAPAPAPASG). The SH3-binding signature appears at 1334-1370 (PLPPSGPAQAPAPTPAPTQLPTPAPAPAPAPASGPGP). Serine 1384 bears the Phosphoserine mark.

Belongs to the neurexin family. In terms of assembly, interacts with CNTN1/contactin in cis form. Expressed in brain. In myelinated nerve fibers predominantly found in paranodal axoglial junctions. In the internodal region of myelinated axons in the CNS and the PNS also found as a thin line apposing the inner mesaxon of the myelin sheath. In PNS neurons this line forms a circumferential ring that apposes the innermost aspect of Schmidt-Lanterman incisures.

Its subcellular location is the membrane. The protein resides in the cell junction. The protein localises to the paranodal septate junction. In terms of biological role, required, with CNTNAP2, for radial and longitudinal organization of myelinated axons. Plays a role in the formation of functional distinct domains critical for saltatory conduction of nerve impulses in myelinated nerve fibers. Demarcates the paranodal region of the axo-glial junction. In association with contactin involved in the signaling between axons and myelinating glial cells. In Mus musculus (Mouse), this protein is Contactin-associated protein 1 (Cntnap1).